Consider the following 203-residue polypeptide: Holliday junction branch migration complex subunit RuvA (203 aa).

The segment at Met1–Asn64 is domain I. The segment at Asn65–Pro142 is domain II. The flexible linker stretch occupies residues Ala143–Pro154. The tract at residues Ala155–Leu203 is domain III.

The protein belongs to the RuvA family. In terms of assembly, homotetramer. Forms an RuvA(8)-RuvB(12)-Holliday junction (HJ) complex. HJ DNA is sandwiched between 2 RuvA tetramers; dsDNA enters through RuvA and exits via RuvB. An RuvB hexamer assembles on each DNA strand where it exits the tetramer. Each RuvB hexamer is contacted by two RuvA subunits (via domain III) on 2 adjacent RuvB subunits; this complex drives branch migration. In the full resolvosome a probable DNA-RuvA(4)-RuvB(12)-RuvC(2) complex forms which resolves the HJ.

The protein localises to the cytoplasm. In terms of biological role, the RuvA-RuvB-RuvC complex processes Holliday junction (HJ) DNA during genetic recombination and DNA repair, while the RuvA-RuvB complex plays an important role in the rescue of blocked DNA replication forks via replication fork reversal (RFR). RuvA specifically binds to HJ cruciform DNA, conferring on it an open structure. The RuvB hexamer acts as an ATP-dependent pump, pulling dsDNA into and through the RuvAB complex. HJ branch migration allows RuvC to scan DNA until it finds its consensus sequence, where it cleaves and resolves the cruciform DNA. This Citrobacter koseri (strain ATCC BAA-895 / CDC 4225-83 / SGSC4696) protein is Holliday junction branch migration complex subunit RuvA.